The sequence spans 740 residues: Catalase-peroxidase (740 aa).

Basic and acidic residues predominate over residues 1-14 (MTENHDAIVTDAKS). Residues 1–21 (MTENHDAIVTDAKSEGSGGCP) are disordered. The segment at residues 108–231 (WHSAGTYRIS…LGAVQMGLIY (124 aa)) is a cross-link (tryptophyl-tyrosyl-methioninium (Trp-Tyr) (with M-257)). His109 (proton acceptor) is an active-site residue. The segment at residues 231 to 257 (YVNPEGPNGNPDPIAAARDIRETFRRM) is a cross-link (tryptophyl-tyrosyl-methioninium (Tyr-Met) (with W-108)). A heme b-binding site is contributed by His272.

The protein belongs to the peroxidase family. Peroxidase/catalase subfamily. As to quaternary structure, homodimer. The cofactor is heme b. Formation of the three residue Trp-Tyr-Met cross-link is important for the catalase, but not the peroxidase activity of the enzyme.

It carries out the reaction H2O2 + AH2 = A + 2 H2O. The enzyme catalyses 2 H2O2 = O2 + 2 H2O. Functionally, bifunctional enzyme with both catalase and broad-spectrum peroxidase activity. This Streptomyces reticuli protein is Catalase-peroxidase.